Reading from the N-terminus, the 104-residue chain is Transcription initiation factor IIA subunit 2 (104 aa).

It belongs to the TFIIA subunit 2 family. As to quaternary structure, TFIIA is a heterodimer of the large unprocessed subunit 1 and a small subunit gamma.

Its subcellular location is the nucleus. Its function is as follows. TFIIA is a component of the transcription machinery of RNA polymerase II and plays an important role in transcriptional activation. TFIIA in a complex with TBP mediates transcriptional activity. The protein is Transcription initiation factor IIA subunit 2 of Schistosoma mansoni (Blood fluke).